The sequence spans 187 residues: Ribosome-recycling factor (187 aa).

The protein belongs to the RRF family.

Its subcellular location is the cytoplasm. Responsible for the release of ribosomes from messenger RNA at the termination of protein biosynthesis. May increase the efficiency of translation by recycling ribosomes from one round of translation to another. This chain is Ribosome-recycling factor, found in Bradyrhizobium sp. (strain ORS 278).